Consider the following 259-residue polypeptide: Thiazole synthase (259 aa).

Lys-99 functions as the Schiff-base intermediate with DXP in the catalytic mechanism. 1-deoxy-D-xylulose 5-phosphate contacts are provided by residues Gly-160, Ala-186 to Gly-187, and Asn-208 to Thr-209.

It belongs to the ThiG family. Homotetramer. Forms heterodimers with either ThiH or ThiS.

The protein resides in the cytoplasm. The enzyme catalyses [ThiS sulfur-carrier protein]-C-terminal-Gly-aminoethanethioate + 2-iminoacetate + 1-deoxy-D-xylulose 5-phosphate = [ThiS sulfur-carrier protein]-C-terminal Gly-Gly + 2-[(2R,5Z)-2-carboxy-4-methylthiazol-5(2H)-ylidene]ethyl phosphate + 2 H2O + H(+). It functions in the pathway cofactor biosynthesis; thiamine diphosphate biosynthesis. In terms of biological role, catalyzes the rearrangement of 1-deoxy-D-xylulose 5-phosphate (DXP) to produce the thiazole phosphate moiety of thiamine. Sulfur is provided by the thiocarboxylate moiety of the carrier protein ThiS. In vitro, sulfur can be provided by H(2)S. The sequence is that of Thiazole synthase from Porphyromonas gingivalis (strain ATCC 33277 / DSM 20709 / CIP 103683 / JCM 12257 / NCTC 11834 / 2561).